Here is a 378-residue protein sequence, read N- to C-terminus: UPF0284 protein MK0224 (378 aa).

Belongs to the UPF0284 family.

This Methanopyrus kandleri (strain AV19 / DSM 6324 / JCM 9639 / NBRC 100938) protein is UPF0284 protein MK0224.